A 354-amino-acid chain; its full sequence is UPF0283 membrane protein CGSHiGG_02710 (354 aa).

3 helical membrane passes run 57-77 (LLKF…VQWI), 87-107 (IYLA…KEII), and 211-231 (ESAV…FIAW).

It belongs to the UPF0283 family.

Its subcellular location is the cell inner membrane. The chain is UPF0283 membrane protein CGSHiGG_02710 from Haemophilus influenzae (strain PittGG).